The chain runs to 139 residues: ATP synthase epsilon chain (139 aa).

It belongs to the ATPase epsilon chain family. As to quaternary structure, F-type ATPases have 2 components, CF(1) - the catalytic core - and CF(0) - the membrane proton channel. CF(1) has five subunits: alpha(3), beta(3), gamma(1), delta(1), epsilon(1). CF(0) has three main subunits: a, b and c.

It localises to the cell membrane. In terms of biological role, produces ATP from ADP in the presence of a proton gradient across the membrane. This is ATP synthase epsilon chain from Pediococcus pentosaceus (strain ATCC 25745 / CCUG 21536 / LMG 10740 / 183-1w).